Here is a 103-residue protein sequence, read N- to C-terminus: MKSLLPLAILAALAVAALCYESHESMESYEVSPFTTRRNANTFISPQQRWHAKAQERVRELNKPAQEINREACDDYKLCERYALIYGYNAAYNRYFRQRRGAK.

The first 19 residues, 1–19 (MKSLLPLAILAALAVAALC), serve as a signal peptide directing secretion. Glu21 bears the 4-carboxyglutamate mark. Ser22, Ser25, and Ser28 each carry phosphoserine. A Gla domain is found at 51-97 (HAKAQERVRELNKPAQEINREACDDYKLCERYALIYGYNAAYNRYFR). A 4-carboxyglutamate mark is found at Glu56, Glu60, Glu67, and Glu71. The cysteines at positions 73 and 79 are disulfide-linked.

Belongs to the osteocalcin/matrix Gla protein family. Post-translationally, requires vitamin K-dependent gamma-carboxylation for its function.

The protein localises to the secreted. Functionally, associates with the organic matrix of bone and cartilage. Thought to act as an inhibitor of bone formation. This is Matrix Gla protein (Mgp) from Rattus norvegicus (Rat).